Here is a 292-residue protein sequence, read N- to C-terminus: ATP synthase gamma chain (292 aa).

It belongs to the ATPase gamma chain family. As to quaternary structure, F-type ATPases have 2 components, CF(1) - the catalytic core - and CF(0) - the membrane proton channel. CF(1) has five subunits: alpha(3), beta(3), gamma(1), delta(1), epsilon(1). CF(0) has three main subunits: a, b and c.

The protein resides in the cell inner membrane. Its function is as follows. Produces ATP from ADP in the presence of a proton gradient across the membrane. The gamma chain is believed to be important in regulating ATPase activity and the flow of protons through the CF(0) complex. This chain is ATP synthase gamma chain, found in Chlorobaculum tepidum (strain ATCC 49652 / DSM 12025 / NBRC 103806 / TLS) (Chlorobium tepidum).